A 315-amino-acid chain; its full sequence is ATP synthase gamma chain (315 aa).

Belongs to the ATPase gamma chain family. In terms of assembly, F-type ATPases have 2 components, CF(1) - the catalytic core - and CF(0) - the membrane proton channel. CF(1) has five subunits: alpha(3), beta(3), gamma(1), delta(1), epsilon(1). CF(0) has three main subunits: a, b and c.

It localises to the cellular thylakoid membrane. Produces ATP from ADP in the presence of a proton gradient across the membrane. The gamma chain is believed to be important in regulating ATPase activity and the flow of protons through the CF(0) complex. The polypeptide is ATP synthase gamma chain (Trichormus variabilis (strain ATCC 29413 / PCC 7937) (Anabaena variabilis)).